Reading from the N-terminus, the 442-residue chain is Cell cycle checkpoint control protein RAD9B (442 aa).

2 disordered regions span residues 370–392 and 422–442; these read EVPE…TEDV and QSLA…FSTF. Residue Ser-387 is modified to Phosphoserine.

It belongs to the rad9 family. In terms of assembly, interacts with HUS1, HUS1B, RAD1, RAD9A and RAD17.

In Bos taurus (Bovine), this protein is Cell cycle checkpoint control protein RAD9B (RAD9B).